Consider the following 357-residue polypeptide: 3-isopropylmalate dehydrogenase (357 aa).

Substrate-binding residues include R97, R107, R135, and D224. Residues D224, D248, and D252 each contribute to the Mg(2+) site. NAD(+) is bound at residue 282-294 (GSAPDIAGKNIAN).

This sequence belongs to the isocitrate and isopropylmalate dehydrogenases family. LeuB type 1 subfamily. In terms of assembly, homodimer. Requires Mg(2+) as cofactor. Mn(2+) is required as a cofactor.

The protein resides in the cytoplasm. The enzyme catalyses (2R,3S)-3-isopropylmalate + NAD(+) = 4-methyl-2-oxopentanoate + CO2 + NADH. It functions in the pathway amino-acid biosynthesis; L-leucine biosynthesis; L-leucine from 3-methyl-2-oxobutanoate: step 3/4. Functionally, catalyzes the oxidation of 3-carboxy-2-hydroxy-4-methylpentanoate (3-isopropylmalate) to 3-carboxy-4-methyl-2-oxopentanoate. The product decarboxylates to 4-methyl-2 oxopentanoate. In Prochlorococcus marinus (strain MIT 9312), this protein is 3-isopropylmalate dehydrogenase.